The sequence spans 404 residues: 6-deoxyerythronolide B hydroxylase (404 aa).

Cysteine 351 is a binding site for heme.

The protein belongs to the cytochrome P450 family. Heme is required as a cofactor.

The protein resides in the cytoplasm. It catalyses the reaction 6-deoxyerythronolide B + 2 reduced [2Fe-2S]-[ferredoxin] + O2 + 2 H(+) = erythronolide B + 2 oxidized [2Fe-2S]-[ferredoxin] + H2O. It participates in antibiotic biosynthesis; erythromycin biosynthesis. Its function is as follows. Catalyzes the conversion of 6-deoxyerythronolide B (6-DEB) to erythronolide B (EB) by the insertion of an oxygen at the 6S position of 6-DEB. Requires the participation of a ferredoxin and a ferredoxin reductase for the transfer of electrons from NADPH to the monooxygenase. This is 6-deoxyerythronolide B hydroxylase from Saccharopolyspora erythraea (strain ATCC 11635 / DSM 40517 / JCM 4748 / NBRC 13426 / NCIMB 8594 / NRRL 2338).